The chain runs to 256 residues: Hydroxyethylthiazole kinase (256 aa).

A substrate-binding site is contributed by Met38. ATP-binding residues include Arg114 and Thr159. Gly186 lines the substrate pocket.

The protein belongs to the Thz kinase family. Mg(2+) is required as a cofactor.

The enzyme catalyses 5-(2-hydroxyethyl)-4-methylthiazole + ATP = 4-methyl-5-(2-phosphooxyethyl)-thiazole + ADP + H(+). It functions in the pathway cofactor biosynthesis; thiamine diphosphate biosynthesis; 4-methyl-5-(2-phosphoethyl)-thiazole from 5-(2-hydroxyethyl)-4-methylthiazole: step 1/1. Its function is as follows. Catalyzes the phosphorylation of the hydroxyl group of 4-methyl-5-beta-hydroxyethylthiazole (THZ). In Streptococcus agalactiae serotype III (strain NEM316), this protein is Hydroxyethylthiazole kinase.